A 167-amino-acid polypeptide reads, in one-letter code: Transmembrane protein 229B (167 aa).

At 1 to 14 the chain is on the cytoplasmic side; it reads MASAEPLTALSRWY. Residues 15 to 35 form a helical membrane-spanning segment; it reads LYAIHGYFCEVMFTAAWEFVV. The Extracellular segment spans residues 36-40; the sequence is NLNWK. Residues 41–61 form a helical membrane-spanning segment; it reads FPGVTSVWALFIYGTSILIVE. Residues 62-73 lie on the Cytoplasmic side of the membrane; it reads RMYLRLRGRCPL. Residues 74 to 94 form a helical membrane-spanning segment; it reads LLRCLIYTLWTYLWEFTTGFI. Over 95-109 the chain is Extracellular; it reads LRQFNACPWDYSQFD. The helical transmembrane segment at 110 to 130 threads the bilayer; sequence FDFMGLITLEYAVPWFCGALI. Topologically, residues 131–167 are cytoplasmic; sequence MEQFIIRNTLRLRFDKDAEPGEPSGALALANGHVKTD.

The protein belongs to the TMEM229 family.

The protein resides in the membrane. This is Transmembrane protein 229B (TMEM229B) from Homo sapiens (Human).